The following is a 304-amino-acid chain: Nod factor export ATP-binding protein I (304 aa).

The ABC transporter domain maps to 6 to 236 (IDFQQVEKRY…EIGCDVIEIY (231 aa)). 38–45 (GPNGAGKT) serves as a coordination point for ATP.

This sequence belongs to the ABC transporter superfamily. Lipooligosaccharide exporter (TC 3.A.1.102) family. The complex is composed of two ATP-binding proteins (NodI) and two transmembrane proteins (NodJ).

It localises to the cell inner membrane. Its function is as follows. Part of the ABC transporter complex NodIJ involved in the export of the nodulation factors (Nod factors), the bacterial signal molecules that induce symbiosis and subsequent nodulation induction. Nod factors are LCO (lipo-chitin oligosaccharide), a modified beta-1,4-linked N-acetylglucosamine oligosaccharide. This subunit is responsible for energy coupling to the transport system. The polypeptide is Nod factor export ATP-binding protein I (Burkholderia pseudomallei (strain K96243)).